Here is a 393-residue protein sequence, read N- to C-terminus: Nuclear speckle splicing regulatory protein 1 homolog (393 aa).

Positions 1-49 (MSAPPKRFGLIVKQKEEPKRAPVRVSSVFGDDDDDEAPATATNTSSASV) are disordered. Over residues 39–48 (ATATNTSSAS) the composition is skewed to low complexity. Positions 76-166 (NYDEIQAIKN…YREQEAEEAA (91 aa)) form a coiled coil. The segment at 187 to 350 (LLNDLARDPT…SLKDKLKPKR (164 aa)) is disordered. Over residues 199 to 209 (KQRKMEKKNVR) the composition is skewed to basic residues. 4 stretches are compositionally biased toward basic and acidic residues: residues 222 to 236 (EDVK…KSIY), 243 to 261 (DEKK…EGEL), 317 to 333 (DHAQ…KSPE), and 341 to 350 (SLKDKLKPKR).

It belongs to the NSRP1 family.

This Caenorhabditis briggsae protein is Nuclear speckle splicing regulatory protein 1 homolog.